Here is a 255-residue protein sequence, read N- to C-terminus: Thiazole synthase (255 aa).

Lys96 (schiff-base intermediate with DXP) is an active-site residue. 1-deoxy-D-xylulose 5-phosphate-binding positions include Gly157, 183 to 184, and 205 to 206; these read AG and NT.

It belongs to the ThiG family. Homotetramer. Forms heterodimers with either ThiH or ThiS.

The protein localises to the cytoplasm. It catalyses the reaction [ThiS sulfur-carrier protein]-C-terminal-Gly-aminoethanethioate + 2-iminoacetate + 1-deoxy-D-xylulose 5-phosphate = [ThiS sulfur-carrier protein]-C-terminal Gly-Gly + 2-[(2R,5Z)-2-carboxy-4-methylthiazol-5(2H)-ylidene]ethyl phosphate + 2 H2O + H(+). Its pathway is cofactor biosynthesis; thiamine diphosphate biosynthesis. Its function is as follows. Catalyzes the rearrangement of 1-deoxy-D-xylulose 5-phosphate (DXP) to produce the thiazole phosphate moiety of thiamine. Sulfur is provided by the thiocarboxylate moiety of the carrier protein ThiS. In vitro, sulfur can be provided by H(2)S. This chain is Thiazole synthase, found in Staphylococcus haemolyticus (strain JCSC1435).